Consider the following 518-residue polypeptide: Ribonuclease Y (518 aa).

The chain crosses the membrane as a helical span at residues 2–22 (VLNILLAIVGLIVGLGLGFVI). The disordered stretch occupies residues 91 to 119 (QREQTLDRKDDSLEKREGSLEEKEEKLGA). The KH domain occupies 208 to 268 (TVSVVTLPND…IRREIARMTL (61 aa)). One can recognise an HD domain in the interval 334–427 (VLNHSIEVAK…VAAADALSAA (94 aa)).

Belongs to the RNase Y family.

The protein localises to the cell membrane. In terms of biological role, endoribonuclease that initiates mRNA decay. This Enterococcus faecalis (strain ATCC 700802 / V583) protein is Ribonuclease Y.